Reading from the N-terminus, the 351-residue chain is Molybdenum import ATP-binding protein ModC (351 aa).

The ABC transporter domain maps to 1 to 229 (MLEINIHQQL…DILADWQSET (229 aa)). 31–38 (GRSGAGKS) serves as a coordination point for ATP. The 62-residue stretch at 290–351 (HSSIRNILNG…IYVQIKSVSL (62 aa)) folds into the Mop domain.

This sequence belongs to the ABC transporter superfamily. Molybdate importer (TC 3.A.1.8) family. The complex is composed of two ATP-binding proteins (ModC), two transmembrane proteins (ModB) and a solute-binding protein (ModA).

It is found in the cell inner membrane. It carries out the reaction molybdate(out) + ATP + H2O = molybdate(in) + ADP + phosphate + H(+). Part of the ABC transporter complex ModABC involved in molybdenum import. Responsible for energy coupling to the transport system. The chain is Molybdenum import ATP-binding protein ModC from Haemophilus ducreyi (strain 35000HP / ATCC 700724).